The following is a 745-amino-acid chain: Cytoskeleton-associated protein 2-like (745 aa).

A disordered region spans residues 25-141 (AKGKLKSQNT…GELSRKPVGS (117 aa)). Over residues 30–61 (KSQNTKPYLKSKNNCQNQPPSKSTIRPKNDVT) the composition is skewed to polar residues. Low complexity predominate over residues 109–120 (SSNPYSKPSSKS). Polar residues predominate over residues 121 to 133 (FQQCEAGSSTTGE). Residues 185–187 (KEN) carry the KEN box motif. Positions 192-203 (LTEPERKPDPKL) are enriched in basic and acidic residues. 3 disordered regions span residues 192–217 (LTEP…YNQT), 256–276 (VKSQ…KPSR), and 385–411 (RFNS…NNGF). Residue K198 forms a Glycyl lysine isopeptide (Lys-Gly) (interchain with G-Cter in SUMO1); alternate linkage. A Glycyl lysine isopeptide (Lys-Gly) (interchain with G-Cter in SUMO2); alternate cross-link involves residue K198. Y204 is subject to Phosphotyrosine. The segment covering 389–411 (AIPSTPSIRPNGTSGNKHNNNGF) has biased composition (polar residues). The residue at position 742 (T742) is a Phosphothreonine. S745 is subject to Phosphoserine.

This sequence belongs to the CKAP2 family. Post-translationally, ubiquitinated by the anaphase promoting complex/cyclosome (APC/C).

It is found in the cytoplasm. The protein resides in the cytoskeleton. Its subcellular location is the spindle pole. Functionally, microtubule-associated protein required for mitotic spindle formation and cell-cycle progression in neural progenitor cells. This is Cytoskeleton-associated protein 2-like (CKAP2L) from Homo sapiens (Human).